Here is a 509-residue protein sequence, read N- to C-terminus: Histidine ammonia-lyase (509 aa).

The segment at residues 144–146 is a cross-link (5-imidazolinone (Ala-Gly)); the sequence is ASG. Residue Ser145 is modified to 2,3-didehydroalanine (Ser).

The protein belongs to the PAL/histidase family. In terms of processing, contains an active site 4-methylidene-imidazol-5-one (MIO), which is formed autocatalytically by cyclization and dehydration of residues Ala-Ser-Gly.

The protein localises to the cytoplasm. It carries out the reaction L-histidine = trans-urocanate + NH4(+). Its pathway is amino-acid degradation; L-histidine degradation into L-glutamate; N-formimidoyl-L-glutamate from L-histidine: step 1/3. The chain is Histidine ammonia-lyase from Rhodospirillum centenum (strain ATCC 51521 / SW).